The primary structure comprises 192 residues: Rhomboid protease GlpG (192 aa).

The Cytoplasmic segment spans residues 1–10 (MKNFLAQQGK). The helical transmembrane segment at 11–31 (ITLILTALCVLIYLAQQLGFE) threads the bilayer. At 32–57 (DDIMYLMHYPAYEEQDSEVWRYISHT) the chain is on the periplasmic side. The helical transmembrane segment at 58–78 (LVHLSNLHILFNLSWFFIFGG) threads the bilayer. The Cytoplasmic portion of the chain corresponds to 79 to 82 (MIER). The chain crosses the membrane as a helical span at residues 83–103 (TFGSVKLLMLYVVASAITGYV). Topologically, residues 104–107 (QNYV) are periplasmic. A helical membrane pass occupies residues 108-128 (SGPAFFGLSGVVYAVLGYVFI). Residue Ser116 is the Nucleophile of the active site. Residues 129–141 (RDKLNHHLFDLPE) lie on the Cytoplasmic side of the membrane. Residues 142-162 (GFFTMLLVGIALGFISPLFGV) traverse the membrane as a helical segment. A topological domain (periplasmic) is located at residue Glu163. A helical transmembrane segment spans residues 164 to 184 (MGNAAHISGLIVGLIWGFIDS). His169 is an active-site residue. The Cytoplasmic portion of the chain corresponds to 185 to 192 (KLRKNSLE).

It belongs to the peptidase S54 family.

The protein localises to the cell inner membrane. It carries out the reaction Cleaves type-1 transmembrane domains using a catalytic dyad composed of serine and histidine that are contributed by different transmembrane domains.. Its function is as follows. Rhomboid-type serine protease that catalyzes intramembrane proteolysis. The chain is Rhomboid protease GlpG (glpG) from Haemophilus influenzae (strain ATCC 51907 / DSM 11121 / KW20 / Rd).